A 302-amino-acid chain; its full sequence is UTP--glucose-1-phosphate uridylyltransferase (302 aa).

The protein belongs to the UDPGP type 2 family. As to quaternary structure, homotetramer or homopentamer. Mg(2+) is required as a cofactor.

It carries out the reaction alpha-D-glucose 1-phosphate + UTP + H(+) = UDP-alpha-D-glucose + diphosphate. In terms of biological role, may play a role in stationary phase survival. In Escherichia coli O157:H7, this protein is UTP--glucose-1-phosphate uridylyltransferase (galU).